The chain runs to 130 residues: MAENQYYGTGRRKSSAARVFIKPGNGNIVINQRSLEQYFGRETARMVVRQPLELVDMVEKLDLYITVKGGGISGQAGAIRHGITRALMEYDESLRGELRKAGFVTRDARQVERKKVGLRKARRRPQFSKR.

The protein belongs to the universal ribosomal protein uS9 family.

This chain is Small ribosomal subunit protein uS9, found in Pectobacterium carotovorum subsp. carotovorum (strain PC1).